We begin with the raw amino-acid sequence, 255 residues long: Tachylectin-2 (255 aa).

Residues 1–19 form the signal peptide; it reads MKFLLVVLGFIGFLKDGIT. WD repeat units follow at residues 20–67, 68–114, 115–161, 162–208, and 209–255; these read VGGE…FLFL, SPGG…FLFF, DPNG…FLFF, HPNG…FLFF, and SSVG…FLFF.

Monomer.

It is found in the secreted. The protein resides in the cytoplasmic granule. In terms of biological role, lectin that binds specifically to N-acetylglucosamine and N-acetylgalactosamine. Is part of the innate immunity host defense system of the horseshoe crab. The chain is Tachylectin-2 from Tachypleus tridentatus (Japanese horseshoe crab).